The sequence spans 212 residues: Endoplasmic reticulum vesicle protein 25 (212 aa).

The first 21 residues, 1-21 (MKSFAACVLLLCALFFEQVFA), serve as a signal peptide directing secretion. At 22–181 (VRFDIPASTK…TNESTNRRVR (160 aa)) the chain is on the lumenal side. The 89-residue stretch at 34 to 122 (QVCIRDFVSE…SRSIELDIES (89 aa)) folds into the GOLD domain. Residues 182-202 (NFSIAVIVVLVALGAWQVNYM) form a helical membrane-spanning segment. Over 203–212 (KNFFRAKHII) the chain is Cytoplasmic.

This sequence belongs to the EMP24/GP25L family.

Its subcellular location is the endoplasmic reticulum membrane. The protein localises to the golgi apparatus membrane. Functionally, constituent of COPII-coated endoplasmic reticulum-derived transport vesicles. Required for efficient transport of a subset of secretory proteins to the Golgi. Facilitates retrograde transport from the Golgi to the endoplasmic reticulum. The polypeptide is Endoplasmic reticulum vesicle protein 25 (ERV25) (Kluyveromyces lactis (strain ATCC 8585 / CBS 2359 / DSM 70799 / NBRC 1267 / NRRL Y-1140 / WM37) (Yeast)).